A 375-amino-acid chain; its full sequence is Matrix protein (375 aa).

It belongs to the morbillivirus/respirovirus/rubulavirus M protein family.

The protein localises to the virion. In terms of biological role, the M protein has a crucial role in virus assembly and interacts with the RNP complex as well as with the viral membrane. The polypeptide is Matrix protein (M) (Mumps virus genotype A (strain Jeryl-Lynn) (MuV)).